We begin with the raw amino-acid sequence, 66 residues long: ATP synthase protein 8 (66 aa).

Residues 8–24 form a helical membrane-spanning segment; sequence PWPMVIMSMILTLFYIT. At lysine 54 the chain carries N6-acetyllysine; alternate. Lysine 54 is modified (N6-succinyllysine; alternate). Residue lysine 57 is modified to N6-acetyllysine.

Belongs to the ATPase protein 8 family. F-type ATPases have 2 components, CF(1) - the catalytic core - and CF(0) - the membrane proton channel. Component of an ATP synthase complex composed of ATP5PB, ATP5MC1, ATP5F1E, ATP5PD, ATP5ME, ATP5PF, ATP5MF, MT-ATP6, MT-ATP8, ATP5F1A, ATP5F1B, ATP5F1D, ATP5F1C, ATP5PO, ATP5MG, ATP5MK and ATP5MJ. Interacts with PRICKLE3.

Its subcellular location is the mitochondrion membrane. Functionally, mitochondrial membrane ATP synthase (F(1)F(0) ATP synthase or Complex V) produces ATP from ADP in the presence of a proton gradient across the membrane which is generated by electron transport complexes of the respiratory chain. F-type ATPases consist of two structural domains, F(1) - containing the extramembraneous catalytic core and F(0) - containing the membrane proton channel, linked together by a central stalk and a peripheral stalk. During catalysis, ATP synthesis in the catalytic domain of F(1) is coupled via a rotary mechanism of the central stalk subunits to proton translocation. Part of the complex F(0) domain. Minor subunit located with subunit a in the membrane. This Alouatta sara (Bolivian red howler monkey) protein is ATP synthase protein 8 (MT-ATP8).